We begin with the raw amino-acid sequence, 441 residues long: LLLLGHASTSTRGFSGNSFKSDLIPQSRRSHSVYGTPGSIRISSPSVPSAIVSSYSSTLSSALPSSSYGGNSFSSSTSFSSGGSDLLLGTSGKEAMQNLNDRLASYLDKVRSLEGKNHELELKIKDWYSQVIPGTGGPDARDYGHLEKEIEDLQNKVNNCRVDTATILLHIDNAKLAADDFRNKYENEQSLRLGVEADINGLKRVLDELALAKADTDMQIEGLRDELDYLKKNHEEDMKAASSGIAGQVNVELDAAPGTNLLDELDACRRDHEAMLDQMRREAERWYNEKAKDVKDKAGEAQETLVSHTSEISDLKRSIQSLEIELQTQLARKSSLESTLAGTESQYGMRIQEIQMKINVFEDQISDLRAKMEFQSQEYQMLLDVKQRLEAEIATYRMLLDSEDSKGSIINHKILTAIEKLVDGIVLSTEVLEKQIPVLSY.

Positions 2–91 are head; the sequence is LLLGHASTST…GGSDLLLGTS (90 aa). Positions 92–127 are coil 1A; that stretch reads GKEAMQNLNDRLASYLDKVRSLEGKNHELELKIKDW. The IF rod domain occupies 92-407; that stretch reads GKEAMQNLND…MLLDSEDSKG (316 aa). Residues 128–149 are linker 1; sequence YSQVIPGTGGPDARDYGHLEKE. The tract at residues 150 to 241 is coil 1B; the sequence is IEDLQNKVNN…KNHEEDMKAA (92 aa). The segment at 242-261 is linker 12; sequence SSGIAGQVNVELDAAPGTNL. The interval 262–403 is coil 2; it reads LDELDACRRD…ATYRMLLDSE (142 aa). The segment at 404–441 is tail; it reads DSKGSIINHKILTAIEKLVDGIVLSTEVLEKQIPVLSY.

Belongs to the intermediate filament family. In terms of assembly, heterotetramer of two type I and two type II keratins. Expressed in skin.

In Protopterus aethiopicus (Marbled lungfish), this protein is Keratin, type I cytoskeletal 15 (KRT15).